The primary structure comprises 144 residues: Tryparedoxin (144 aa).

The region spanning 2 to 144 (SGLAKYLPGA…PDGANFPWPN (143 aa)) is the Thioredoxin domain. A disulfide bond links cysteine 40 and cysteine 43.

This sequence belongs to the thioredoxin family.

Its function is as follows. Acts as a thiol-disulfide oxidoreductase. It is spontaneously reduced by trypanothione. In Trypanosoma brucei brucei, this protein is Tryparedoxin.